The chain runs to 154 residues: Insulin-like peptide 1 (154 aa).

The N-terminal stretch at 1–29 (MFSQHNGAAVHGLRLQSLLIAAMLTAAMA) is a signal peptide. Cystine bridges form between C49–C138, C61–C151, and C137–C142. Positions 72–92 (RESLLGNSDDDEDTEQEVQDD) are disordered. A propeptide spans 73–122 (ESLLGNSDDDEDTEQEVQDDSSMWQTLDGAGYSFSPLLTNLYGSEVLIKM) (connecting peptide). Over residues 79–91 (SDDDEDTEQEVQD) the composition is skewed to acidic residues.

Belongs to the insulin family. As to quaternary structure, heterodimer of a B chain and an A chain linked by two disulfide bonds.

The protein localises to the secreted. Functionally, possible ligand of InR/insulin-like receptor. The protein is Insulin-like peptide 1 of Drosophila melanogaster (Fruit fly).